Consider the following 152-residue polypeptide: Large ribosomal subunit protein bL9 (152 aa).

This sequence belongs to the bacterial ribosomal protein bL9 family.

Its function is as follows. Binds to the 23S rRNA. The protein is Large ribosomal subunit protein bL9 of Synechococcus sp. (strain RCC307).